The chain runs to 287 residues: UPF0354 protein SSP1020 (287 aa).

This sequence belongs to the UPF0354 family.

The protein is UPF0354 protein SSP1020 of Staphylococcus saprophyticus subsp. saprophyticus (strain ATCC 15305 / DSM 20229 / NCIMB 8711 / NCTC 7292 / S-41).